Consider the following 465-residue polypeptide: GTPase Der (465 aa).

2 EngA-type G domains span residues 3 to 166 and 184 to 358; these read FLVA…LNEY and IHFS…ACAN. GTP is bound by residues 9-16, 56-60, 118-121, 190-197, 237-241, and 302-305; these read GRANVGKS, DTGGI, NKVD, GRPNVGKS, DTAGV, and NKWD. A KH-like domain is found at 359-443; it reads KKITTADATC…PIVFEFKQSE (85 aa). The disordered stretch occupies residues 446–465; the sequence is FADRKNKRSKDEGSKSKKVK.

Belongs to the TRAFAC class TrmE-Era-EngA-EngB-Septin-like GTPase superfamily. EngA (Der) GTPase family. As to quaternary structure, associates with the 50S ribosomal subunit.

Functionally, GTPase that plays an essential role in the late steps of ribosome biogenesis. The sequence is that of GTPase Der from Francisella tularensis subsp. mediasiatica (strain FSC147).